The sequence spans 828 residues: MQDHLVNETKNIVEVGIDSSIEESYLAYSMSVIIGRALPDARDGLKPVHRRILYAMHELGLTSKVAYKKSARIVGDVIGKYHPHGDTAVYDALVRMAQDFSMRLELVDGQGNFGSIDGDNAAAMRYTEARMTKASEEILRDIDKDTIDFVPNYDDTLKEPDILPSRLPNLLVNGANGIAVGMATSIPPHRIDEIIDALAHVLGNPNAELDKILEFVKGPDFPTGGIIYGKAGIVEAYKTGRGRVKVRAKVHVEKTKNKEIIVLGEMPFQTNKAKLVEQISDLAREKQIEGISEVRDESDREGIRVVIELKRDAMSEIVLNHLYKLTTMETTFSIILLAIYNKEPKIFTLLELLRLFLNHRKTIIIRRTIFELEKAKARAHILEGYLIALDNIDEIVRLIKTSPSPEAAKNALIERFSLSEIQSKAILEMRLQRLTGLERDKIKEEYQNLLELIDDLNGILKSEDRLNEVVKTELLEVKEQFSSPRRTEIQESYESIDTEDLIANEPMVVSMSYKGYVKRVDLKAYERQNRGGKGKLSGSTYEDDFIENFFVANTHDILLFITNKGQLYHLKVYKIPEASRIAMGKAIVNLISLAPNEKIMATLSTKDFSDERSLAFFTKNGVVKRTNLSEFGGNRSYSGIRAIVLDEGDELVGAKVVDKNAKHLLIASYLGMFIKFPLEDVREIGRTTRGVMGIRLNENDFVVGAVVISDDSNKLLSVSENGLGKQTLAEAYREQSRGGKGVIGMKLTQKTGNLVSVISVDDENLNLMILTASAKMIRVSIKDIRETGRNASGVKLINTADKVVYVNSCPKEEEPENLETSSVQNLFE.

The 464-residue stretch at 38–501 (LPDARDGLKP…SYESIDTEDL (464 aa)) folds into the Topo IIA-type catalytic domain. Tyr-126 serves as the catalytic O-(5'-phospho-DNA)-tyrosine intermediate. The short motif at 528–534 (QNRGGKG) is the GyrA-box element.

It belongs to the type II topoisomerase GyrA/ParC subunit family. As to quaternary structure, heterotetramer, composed of two GyrA and two GyrB chains. In the heterotetramer, GyrA contains the active site tyrosine that forms a transient covalent intermediate with DNA, while GyrB binds cofactors and catalyzes ATP hydrolysis.

It localises to the cytoplasm. It carries out the reaction ATP-dependent breakage, passage and rejoining of double-stranded DNA.. Functionally, a type II topoisomerase that negatively supercoils closed circular double-stranded (ds) DNA in an ATP-dependent manner to modulate DNA topology and maintain chromosomes in an underwound state. Negative supercoiling favors strand separation, and DNA replication, transcription, recombination and repair, all of which involve strand separation. Also able to catalyze the interconversion of other topological isomers of dsDNA rings, including catenanes and knotted rings. Type II topoisomerases break and join 2 DNA strands simultaneously in an ATP-dependent manner. The sequence is that of DNA gyrase subunit A from Helicobacter pylori (strain J99 / ATCC 700824) (Campylobacter pylori J99).